Consider the following 100-residue polypeptide: Urease subunit gamma (100 aa).

It belongs to the urease gamma subunit family. In terms of assembly, heterotrimer of UreA (gamma), UreB (beta) and UreC (alpha) subunits. Three heterotrimers associate to form the active enzyme.

The protein localises to the cytoplasm. The catalysed reaction is urea + 2 H2O + H(+) = hydrogencarbonate + 2 NH4(+). It participates in nitrogen metabolism; urea degradation; CO(2) and NH(3) from urea (urease route): step 1/1. The sequence is that of Urease subunit gamma from Azoarcus sp. (strain BH72).